The chain runs to 416 residues: Phosphoglycerate kinase (416 aa).

Substrate is bound by residues 28–30 (DMN), R44, 65–68 (HQSR), R122, and R162. Residues E337 and 362–365 (GGHI) contribute to the ATP site.

This sequence belongs to the phosphoglycerate kinase family. Monomer.

The protein resides in the cytoplasm. The catalysed reaction is (2R)-3-phosphoglycerate + ATP = (2R)-3-phospho-glyceroyl phosphate + ADP. Its pathway is carbohydrate degradation; glycolysis; pyruvate from D-glyceraldehyde 3-phosphate: step 2/5. This Methanosarcina mazei (strain ATCC BAA-159 / DSM 3647 / Goe1 / Go1 / JCM 11833 / OCM 88) (Methanosarcina frisia) protein is Phosphoglycerate kinase.